The chain runs to 161 residues: Allophycocyanin alpha chain 2 (161 aa).

N4-methylasparagine is present on Asn71. Cys81 is a (2R,3E)-phycocyanobilin binding site.

It belongs to the phycobiliprotein family. As to quaternary structure, component of the phycobilisome. Heterodimer of an alpha and a beta chain. In terms of processing, contains one covalently linked bilin chromophore.

It localises to the cellular thylakoid membrane. Its function is as follows. Light-harvesting photosynthetic bile pigment-protein from the phycobiliprotein complex. Allophycocyanin has a maximum absorption at approximately 650 nanometers. In Microchaete diplosiphon (Fremyella diplosiphon), this protein is Allophycocyanin alpha chain 2 (apcA2).